A 78-amino-acid polypeptide reads, in one-letter code: Serine rich endogenous peptide 12 (78 aa).

The signal sequence occupies residues Met-1–Cys-24. A propeptide spans Arg-25–Arg-43 (removed in mature form). The interval Ser-47–Tyr-78 is disordered. Positions Ser-50–Arg-64 match the SCOOP motif motif. The SxS motif essential for MIK2 binding motif lies at Ser-56–Ser-58.

Belongs to the serine rich endogenous peptide (SCOOP) phytocytokine family. In terms of assembly, interacts with MIK2 (via extracellular leucine-rich repeat domain); this interaction triggers the formation of complex between MIK2 and the BAK1/SERK3 and SERK4 coreceptors, and subsequent BAK1 activation by phosphorylation on 'Ser-612'. Mostly expressed in the whole root system, and, to a lower extent, in seedlings shoots.

Its subcellular location is the cell membrane. The protein resides in the secreted. It is found in the extracellular space. It localises to the apoplast. In terms of biological role, brassicaceae-specific phytocytokine (plant endogenous peptide released into the apoplast) perceived by MIK2 in a BAK1/SERK3 and SERK4 coreceptors-dependent manner, that modulates various physiological and antimicrobial processes including root growth prevention, phospholipid signaling pathway activation (e.g. accumulation of phosphatidic acid (PA), but transient reduction of phosphatidylinositol 4,5-bisphosphate (PIP(2)) levels) and reactive oxygen species (ROS) response regulation. Moderates primary root growth, and regulates root meristems and cell elongation; this root growth regulation is associated with the modulation of ROS metabolism and alteration of cell wall structure, and depends on variations in many genes expression. Promotes ROS (e.g. superoxide anion O(2) and hydrogen peroxide H(2)O(2)) production and MAPK (e.g. MPK3, MPK4 and MPK6) activation in a MIK2-dependent manner, thus leading to the up-regulation of immune-related marker genes (e.g. WRKY30, WRKY33 and CYP81F2). Involved in biotic and oxidative stress responses; acts as a negative regulator of defense against necrotrophic pathogens such as the bacteria Erwinia amylovora and the fungus Alternaria brassicicola. Able to prime defense responses against the pathogenic bacteria Pseudomonas syringae pv. tomato DC3000. Contributes to the triggering of defense responses toward generalist herbivores such as Spodoptera littoralis, probably via the activation of jasmonate and indole glucosinolate biosynthesis. Triggers the expression of several PROSCOOP genes (e.g. PROSCOOP3, PROSCOOP7, PROSCOOP12 and PROSCOOP13). The protein is Serine rich endogenous peptide 12 of Arabidopsis thaliana (Mouse-ear cress).